The chain runs to 369 residues: Glycolate oxidase (369 aa).

Methionine 1 bears the N-acetylmethionine mark. The FMN hydroxy acid dehydrogenase domain occupies 1–359; the sequence is MEITNVNEYE…SRSHIAADWD (359 aa). Residue tyrosine 24 participates in glyoxylate binding. FMN-binding positions include 77–79, serine 106, 127–129, and threonine 155; these read PTA and QLY. Tyrosine 129 is a binding site for glyoxylate. Arginine 164 is a binding site for glyoxylate. Residues lysine 230 and serine 252 each contribute to the FMN site. 2 residues coordinate glyoxylate: histidine 254 and arginine 257. The active-site Proton acceptor is histidine 254. FMN is bound by residues 285–289 and 308–309; these read DGGVR and GR. A Microbody targeting signal motif is present at residues 367 to 369; it reads ARL.

Belongs to the FMN-dependent alpha-hydroxy acid dehydrogenase family. As to quaternary structure, homotetramer. The cofactor is FMN.

It localises to the peroxisome. The enzyme catalyses glycolate + O2 = glyoxylate + H2O2. It carries out the reaction a (2S)-2-hydroxycarboxylate + O2 = a 2-oxocarboxylate + H2O2. It participates in photosynthesis; photorespiration; glycine from 2-phosphoglycolate: step 2/3. In terms of biological role, catalyzes the oxidation of glycolate to glyoxylate, with a reduction of O2 to H2O2. Is a key enzyme in photorespiration in green plants. To a lesser extent, is also able to use L-lactate and 2-hydroxbyutanoate as substrate in vitro, but shows almost no activity with L-mandelate. This is Glycolate oxidase from Spinacia oleracea (Spinach).